Consider the following 566-residue polypeptide: MDGTAESREGTQFGPYRLRRLVGRGGMGDVYEAEDTVRERIVALKLMSETLSSDPDFRTRMQREARTAGRLQEPHVVPIHDFGEIDGQLYVDMRLINGVDLAAMLRRQGPLAPPRAVAIVRQIGSALDAAHAAGATHRDVKPENILVSADDFAYLVDFGIASATTDEKLTQLGNTVGTLYYMAPERFSESHATYRADIYALTCVLYECLTGSPPYQGDQLSVMGAHINQAIPRPSTVRPGIPVAFDAVIARGMAKNPEDRYVTCGDLSAAAHAALATADQDRATDILRRSQVAKLPVPSTHPVSPGTRWPQPTPWAGGAPPWGPPSSPLPRSARQPWLWVGVAVAVVVALAGGLGIALAHPWRSSGPRTSAPPPPPPADAVELRVLNDGVFVGSSVAPTTIDIFNEPICPPCGSFIRSYASDIDTAVADKQLAVRYHLLNFLDDQSHSKNYSTRAVAASYCVAGQNDPKLYASFYSALFGSDFQPQENAASDRTDAELAHLAQTVGAEPTAISCIKSGADLGTAQTKATNASETLAGFNASGTPFVWDGSMVVNYQDPSWLARLIG.

The Cytoplasmic segment spans residues 1–337 (MDGTAESREG…PLPRSARQPW (337 aa)). At Ser7 the chain carries Phosphoserine; by autocatalysis. Phosphothreonine; by autocatalysis is present on Thr11. Positions 16 to 275 (YRLRRLVGRG…DLSAAAHAAL (260 aa)) constitute a Protein kinase domain. ATP is bound by residues 22–30 (VGRGGMGDV) and Lys45. 2 positions are modified to phosphothreonine; by autocatalysis: Thr50 and Thr59. Asp139 (proton acceptor) is an active-site residue. Phosphothreonine; by autocatalysis occurs at positions 170, 175, and 178. The disordered stretch occupies residues 296–330 (PVPSTHPVSPGTRWPQPTPWAGGAPPWGPPSSPLP). A helical transmembrane segment spans residues 338 to 358 (LWVGVAVAVVVALAGGLGIAL). The Extracellular segment spans residues 359–566 (AHPWRSSGPR…DPSWLARLIG (208 aa)).

Belongs to the protein kinase superfamily. Ser/Thr protein kinase family. Post-translationally, autophosphorylated on serine and threonine residues. Dephosphorylated by PstP.

It is found in the cell membrane. The catalysed reaction is L-seryl-[protein] + ATP = O-phospho-L-seryl-[protein] + ADP + H(+). The enzyme catalyses L-threonyl-[protein] + ATP = O-phospho-L-threonyl-[protein] + ADP + H(+). In Mycobacterium bovis (strain ATCC BAA-935 / AF2122/97), this protein is Serine/threonine-protein kinase PknE (pknE).